A 147-amino-acid polypeptide reads, in one-letter code: Sec-independent protein translocase protein TatB (147 aa).

Residues 1–21 (MFDFGFSELIVIAVVTLIVVG) form a helical membrane-spanning segment. Residues 117 to 147 (APAPMSLAPHGDAASAGREPAAVPGSGPEKA) are disordered.

The protein belongs to the TatB family. The Tat system comprises two distinct complexes: a TatABC complex, containing multiple copies of TatA, TatB and TatC subunits, and a separate TatA complex, containing only TatA subunits. Substrates initially bind to the TatABC complex, which probably triggers association of the separate TatA complex to form the active translocon.

The protein resides in the cell inner membrane. Part of the twin-arginine translocation (Tat) system that transports large folded proteins containing a characteristic twin-arginine motif in their signal peptide across membranes. Together with TatC, TatB is part of a receptor directly interacting with Tat signal peptides. TatB may form an oligomeric binding site that transiently accommodates folded Tat precursor proteins before their translocation. This Aromatoleum aromaticum (strain DSM 19018 / LMG 30748 / EbN1) (Azoarcus sp. (strain EbN1)) protein is Sec-independent protein translocase protein TatB.